The primary structure comprises 438 residues: MRLSRFFLPILKENPKEAEIVSHRLMLRAGMLRQEAAGIYAWLPLGHRVLKKIEQIVREEQNRAGAIELLMPTLQLADLWRESGRYDAYGPEMLRIADRHKRELLYGPTNEEMITEIFRAYIKSYKSLPLNLYHIQWKFRDEQRPRFGVMRGREFLMKDAYSFDVDEAGARKSYNKMFVAYLRTFARMGLKAIPMRAETGPIGGDLSHEFIVLAETGESGVYIDRDVLNLPVPDENVDYDGDLTPIIKQWTSVYAATEDVHEPARYESEVPEANRLNTRGIEVGQIFYFGTKYSDSMKANVTGPDGTDAPIHGGSYGVGVSRLLGAIIEACHDDNGIIWPEAVAPFRVTILNLKQGDAATDAACDQLYRELSAKGVDVLYDDTDQRAGAKFATADLIGIPWQIHVGPRGLAEGKVELKRRSDGSRENLALADVVARLT.

It belongs to the class-II aminoacyl-tRNA synthetase family. ProS type 2 subfamily. In terms of assembly, homodimer.

Its subcellular location is the cytoplasm. It catalyses the reaction tRNA(Pro) + L-proline + ATP = L-prolyl-tRNA(Pro) + AMP + diphosphate. Functionally, catalyzes the attachment of proline to tRNA(Pro) in a two-step reaction: proline is first activated by ATP to form Pro-AMP and then transferred to the acceptor end of tRNA(Pro). In Rhodopseudomonas palustris (strain TIE-1), this protein is Proline--tRNA ligase.